Reading from the N-terminus, the 324-residue chain is dITP/XTP pyrophosphatase (324 aa).

Residues 1-126 form a unknown region; sequence MTKSIFEYKD…SDNKSDFGDV (126 aa). Residues 127-324 are NTP pyrophosphatase; that stretch reads LLIATRNEGK…EVFPAWQNKQ (198 aa). A substrate-binding site is contributed by 131–136; that stretch reads TRNEGK. Residue Asp-193 is the Proton acceptor of the active site. Asp-193 contacts Mg(2+). Residues Ser-194, 277–280, Lys-300, and 305–306 each bind substrate; these read FGYD and HR.

It belongs to the HAM1 NTPase family. In terms of assembly, homodimer. Mg(2+) serves as cofactor.

The catalysed reaction is XTP + H2O = XMP + diphosphate + H(+). It carries out the reaction dITP + H2O = dIMP + diphosphate + H(+). It catalyses the reaction ITP + H2O = IMP + diphosphate + H(+). Its function is as follows. Pyrophosphatase that catalyzes the hydrolysis of nucleoside triphosphates to their monophosphate derivatives, with a high preference for the non-canonical purine nucleotides XTP (xanthosine triphosphate), dITP (deoxyinosine triphosphate) and ITP. Seems to function as a house-cleaning enzyme that removes non-canonical purine nucleotides from the nucleotide pool, thus preventing their incorporation into DNA/RNA and avoiding chromosomal lesions. In Streptococcus thermophilus (strain CNRZ 1066), this protein is dITP/XTP pyrophosphatase.